Here is a 391-residue protein sequence, read N- to C-terminus: Phosphoglycerate kinase (391 aa).

Substrate contacts are provided by residues 16-18, R31, 54-57, R108, and R141; these read DLN and HLGR. Residues K192, E314, and 340-343 each bind ATP; that span reads GGDT.

This sequence belongs to the phosphoglycerate kinase family. As to quaternary structure, monomer.

Its subcellular location is the cytoplasm. It carries out the reaction (2R)-3-phosphoglycerate + ATP = (2R)-3-phospho-glyceroyl phosphate + ADP. It functions in the pathway carbohydrate degradation; glycolysis; pyruvate from D-glyceraldehyde 3-phosphate: step 2/5. In Coxiella burnetii (strain RSA 493 / Nine Mile phase I), this protein is Phosphoglycerate kinase.